Consider the following 57-residue polypeptide: Small ribosomal subunit protein eS27 (57 aa).

4 residues coordinate Zn(2+): Cys-10, Cys-13, Cys-29, and Cys-32. The segment at 10 to 32 (CGDCENEQVVFGKASSVVSCAVC) adopts a C4-type zinc-finger fold.

It belongs to the eukaryotic ribosomal protein eS27 family. As to quaternary structure, part of the 30S ribosomal subunit. Zn(2+) is required as a cofactor.

This chain is Small ribosomal subunit protein eS27, found in Halorubrum lacusprofundi (strain ATCC 49239 / DSM 5036 / JCM 8891 / ACAM 34).